A 379-amino-acid chain; its full sequence is Cytochrome b (379 aa).

4 helical membrane passes run 33–53 (FGSL…FLAM), 77–98 (WLIR…YLHI), 113–133 (WNIG…GYVL), and 178–198 (FFAF…IHLL). 2 residues coordinate heme b: histidine 83 and histidine 97. Histidine 182 and histidine 196 together coordinate heme b. Histidine 201 contributes to the a ubiquinone binding site. The next 4 membrane-spanning stretches (helical) occupy residues 226-246 (YKDL…ALFY), 288-308 (LGGV…PILH), 320-340 (ASQL…WIGG), and 347-367 (YIII…VLNP).

The protein belongs to the cytochrome b family. As to quaternary structure, the cytochrome bc1 complex contains 3 respiratory subunits (MT-CYB, CYC1 and UQCRFS1), 2 core proteins (UQCRC1 and UQCRC2) and probably 6 low-molecular weight proteins. It depends on heme b as a cofactor.

It localises to the mitochondrion inner membrane. Its function is as follows. Component of the ubiquinol-cytochrome c reductase complex (complex III or cytochrome b-c1 complex) that is part of the mitochondrial respiratory chain. The b-c1 complex mediates electron transfer from ubiquinol to cytochrome c. Contributes to the generation of a proton gradient across the mitochondrial membrane that is then used for ATP synthesis. The protein is Cytochrome b (mt-cyb) of Anguilla reinhardtii (Speckled longfin eel).